Consider the following 350-residue polypeptide: Carbamoyl dehydratase HypE (350 aa).

Cys350 bears the S-carbamoylcysteine mark. The residue at position 350 (Cys350) is an S-cyanocysteine.

It belongs to the HypE family. Post-translationally, modified by HypF, which adds a carboxamido group to the thiolate of the C-terminal cysteine, yielding a protein-S-carboxamide. The carboxamido group is then dehydrated by HypE itself to yield a protein-thiocyanate.

The catalysed reaction is C-terminal S-carboxamide-L-cysteinyl-[HypE protein] + ATP = C-terminal S-cyanate-L-cysteinyl-[HypE protein] + ADP + phosphate + H(+). Its pathway is protein modification; [NiFe] hydrogenase maturation. Functionally, involved in the maturation of [NiFe] hydrogenases. Along with HypF, it catalyzes the synthesis of the CN ligands of the active site iron of [NiFe]-hydrogenases. HypE catalyzes the ATP-dependent dehydration of the carboxamido group attached to its C-terminal cysteine to a cyano group. This is Carbamoyl dehydratase HypE from Rhizobium leguminosarum bv. viciae.